Reading from the N-terminus, the 295-residue chain is ATP synthase gamma chain (295 aa).

It belongs to the ATPase gamma chain family. In terms of assembly, F-type ATPases have 2 components, CF(1) - the catalytic core - and CF(0) - the membrane proton channel. CF(1) has five subunits: alpha(3), beta(3), gamma(1), delta(1), epsilon(1). CF(0) has three main subunits: a, b and c.

The protein resides in the cell inner membrane. Produces ATP from ADP in the presence of a proton gradient across the membrane. The gamma chain is believed to be important in regulating ATPase activity and the flow of protons through the CF(0) complex. This Maricaulis maris (strain MCS10) (Caulobacter maris) protein is ATP synthase gamma chain.